Consider the following 389-residue polypeptide: Cytochrome b (389 aa).

4 helical membrane-spanning segments follow: residues phenylalanine 32 to methionine 52, tryptophan 76 to glycine 98, leucine 113 to valine 133, and phenylalanine 179 to methionine 199. Heme b contacts are provided by histidine 82 and histidine 96. Residues histidine 183 and histidine 197 each coordinate heme b. Residue histidine 202 coordinates a ubiquinone. 4 helical membrane passes run phenylalanine 225–phenylalanine 245, leucine 289–aspartate 309, alanine 321–serine 341, and tyrosine 348–proline 368.

The protein belongs to the cytochrome b family. As to quaternary structure, fungal cytochrome b-c1 complex contains 10 subunits; 3 respiratory subunits, 2 core proteins and 5 low-molecular weight proteins. Cytochrome b-c1 complex is a homodimer. It depends on heme b as a cofactor.

It is found in the mitochondrion inner membrane. Functionally, component of the ubiquinol-cytochrome c reductase complex (complex III or cytochrome b-c1 complex) that is part of the mitochondrial respiratory chain. The b-c1 complex mediates electron transfer from ubiquinol to cytochrome c. Contributes to the generation of a proton gradient across the mitochondrial membrane that is then used for ATP synthesis. In Strobilurus tenacellus, this protein is Cytochrome b (COB).